Here is a 787-residue protein sequence, read N- to C-terminus: LPS-assembly protein LptD (787 aa).

A signal peptide spans 1 to 24 (MKKSFPTLLATLVWSALYSQHALA).

The protein belongs to the LptD family. In terms of assembly, component of the lipopolysaccharide transport and assembly complex. Interacts with LptE and LptA.

Its subcellular location is the cell outer membrane. Its function is as follows. Together with LptE, is involved in the assembly of lipopolysaccharide (LPS) at the surface of the outer membrane. In Pectobacterium atrosepticum (strain SCRI 1043 / ATCC BAA-672) (Erwinia carotovora subsp. atroseptica), this protein is LPS-assembly protein LptD.